A 230-amino-acid polypeptide reads, in one-letter code: Protein GrpE (230 aa).

2 disordered regions span residues methionine 1 to lysine 28 and glycine 209 to alanine 230. Positions asparagine 221 to alanine 230 are enriched in polar residues.

The protein belongs to the GrpE family. As to quaternary structure, homodimer.

It localises to the cytoplasm. In terms of biological role, participates actively in the response to hyperosmotic and heat shock by preventing the aggregation of stress-denatured proteins, in association with DnaK and GrpE. It is the nucleotide exchange factor for DnaK and may function as a thermosensor. Unfolded proteins bind initially to DnaJ; upon interaction with the DnaJ-bound protein, DnaK hydrolyzes its bound ATP, resulting in the formation of a stable complex. GrpE releases ADP from DnaK; ATP binding to DnaK triggers the release of the substrate protein, thus completing the reaction cycle. Several rounds of ATP-dependent interactions between DnaJ, DnaK and GrpE are required for fully efficient folding. This Brucella ovis (strain ATCC 25840 / 63/290 / NCTC 10512) protein is Protein GrpE.